Consider the following 217-residue polypeptide: MRIVLVGPPGAGKGTQATRLAETLHIPHISTGDLFRANISQQTELGKLAKSYMNAGNLVPDEVTIAMAKDRMEQPDAEGGFLLDGFPRNVSQAEALDELLETEGMKLDAVLDLEAPEDEVVKRIAGRRVCRNEPKHVFHVTYTPPKKEGVCDVCGGELYQRDDDSEETVRKRLEVYHTQTEPIIDYYKSQGLVATIAATGPVDEVTRRALEALKRDQ.

An ATP-binding site is contributed by 10-15 (GAGKGT). An NMP region spans residues 30–59 (STGDLFRANISQQTELGKLAKSYMNAGNLV). AMP contacts are provided by residues Thr-31, Arg-36, 57–59 (NLV), 85–88 (GFPR), and Gln-92. Residues 126 to 164 (GRRVCRNEPKHVFHVTYTPPKKEGVCDVCGGELYQRDDD) form an LID region. Residues Arg-127 and 137–138 (VF) each bind ATP. 2 residues coordinate AMP: Arg-161 and Arg-172. Gly-200 provides a ligand contact to ATP.

It belongs to the adenylate kinase family. As to quaternary structure, monomer.

It is found in the cytoplasm. It catalyses the reaction AMP + ATP = 2 ADP. Its pathway is purine metabolism; AMP biosynthesis via salvage pathway; AMP from ADP: step 1/1. Catalyzes the reversible transfer of the terminal phosphate group between ATP and AMP. Plays an important role in cellular energy homeostasis and in adenine nucleotide metabolism. The chain is Adenylate kinase from Streptomyces coelicolor (strain ATCC BAA-471 / A3(2) / M145).